The following is a 238-amino-acid chain: MEILPAIDLKDGKAVRLTKGLMESAKIYSDEPWQVAKRFEEMGSRWLHLVDLNGAFAGEPKNLEQIKKIRANTSLKIELGGGIRDEETIRKYIDLGIERLILGSIAVKNPQFVKAMAAKYPIAVGIDAIDGFVAVEGWAKTSTMRATDLAREFAKSGVQAIICTDVGKDGTLSGVNVDFTVSIAEASGIDTIASGGVRDIEDIKKLQATGTVAGVIVGKAFYEGTLDLEEAFRLVQNG.

Asp-8 (proton acceptor) is an active-site residue. The active-site Proton donor is the Asp-127.

This sequence belongs to the HisA/HisF family.

The protein resides in the cytoplasm. The catalysed reaction is 1-(5-phospho-beta-D-ribosyl)-5-[(5-phospho-beta-D-ribosylamino)methylideneamino]imidazole-4-carboxamide = 5-[(5-phospho-1-deoxy-D-ribulos-1-ylimino)methylamino]-1-(5-phospho-beta-D-ribosyl)imidazole-4-carboxamide. Its pathway is amino-acid biosynthesis; L-histidine biosynthesis; L-histidine from 5-phospho-alpha-D-ribose 1-diphosphate: step 4/9. The chain is 1-(5-phosphoribosyl)-5-[(5-phosphoribosylamino)methylideneamino] imidazole-4-carboxamide isomerase from Nitratiruptor sp. (strain SB155-2).